The sequence spans 344 residues: N-acetyl-gamma-glutamyl-phosphate reductase (344 aa).

The active site involves cysteine 150.

Belongs to the NAGSA dehydrogenase family. Type 1 subfamily.

It localises to the cytoplasm. It carries out the reaction N-acetyl-L-glutamate 5-semialdehyde + phosphate + NADP(+) = N-acetyl-L-glutamyl 5-phosphate + NADPH + H(+). It participates in amino-acid biosynthesis; L-arginine biosynthesis; N(2)-acetyl-L-ornithine from L-glutamate: step 3/4. Catalyzes the NADPH-dependent reduction of N-acetyl-5-glutamyl phosphate to yield N-acetyl-L-glutamate 5-semialdehyde. In Pseudomonas aeruginosa (strain ATCC 15692 / DSM 22644 / CIP 104116 / JCM 14847 / LMG 12228 / 1C / PRS 101 / PAO1), this protein is N-acetyl-gamma-glutamyl-phosphate reductase.